Consider the following 197-residue polypeptide: Recombination protein RecR (197 aa).

The C4-type zinc-finger motif lies at 57-72 (CSVCFALTEQNPCPIC). Residues 79-174 (SVICVVETSQ…RVTRLAHGIP (96 aa)) form the Toprim domain.

It belongs to the RecR family.

Its function is as follows. May play a role in DNA repair. It seems to be involved in an RecBC-independent recombinational process of DNA repair. It may act with RecF and RecO. The polypeptide is Recombination protein RecR (Trichlorobacter lovleyi (strain ATCC BAA-1151 / DSM 17278 / SZ) (Geobacter lovleyi)).